The primary structure comprises 192 residues: Small ribosomal subunit protein uS5 (192 aa).

An S5 DRBM domain is found at Leu22 to Val85.

It belongs to the universal ribosomal protein uS5 family. As to quaternary structure, part of the 30S ribosomal subunit. Contacts proteins S4 and S8.

With S4 and S12 plays an important role in translational accuracy. Its function is as follows. Located at the back of the 30S subunit body where it stabilizes the conformation of the head with respect to the body. The sequence is that of Small ribosomal subunit protein uS5 from Gluconacetobacter diazotrophicus (strain ATCC 49037 / DSM 5601 / CCUG 37298 / CIP 103539 / LMG 7603 / PAl5).